Reading from the N-terminus, the 609-residue chain is Mitochondrial nucleoid-associated protein 1 (609 aa).

Topologically, residues 1–552 (MSDNPPRMEV…IRCNTTIRKS (552 aa)) are mitochondrial matrix. Disordered regions lie at residues 142–168 (ASEK…NPSE), 183–202 (SNQD…TTSG), and 410–441 (QLSL…HTPQ). Over residues 146–161 (TSPKRELAKDLPKSGE) the composition is skewed to basic and acidic residues. Polar residues predominate over residues 418–441 (DSQFQASHTGCQSPLCSAQRHTPQ). Residues 553–573 (GFGGITMLFTGYFVLCCSWSF) form a helical membrane-spanning segment. Topologically, residues 574–609 (RRLKKLCRPLPWKSTVPPCIGVAKTTGDCRSKTCLD) are mitochondrial intermembrane.

It is found in the mitochondrion inner membrane. The protein localises to the mitochondrion matrix. It localises to the mitochondrion nucleoid. Functionally, critical regulator of mitochondrial DNA (mtDNA) abundance. Binds dsDNA throughout the mitochondrial genome without sequence specificity and controls mtDNA copy number by promoting its replication. Also plays important roles in mitochondrial metabolism and cell proliferation. The protein is Mitochondrial nucleoid-associated protein 1 of Homo sapiens (Human).